The primary structure comprises 251 residues: Flap endonuclease Xni (251 aa).

Mg(2+) is bound at residue Asp104. Residues 160-249 (VLPRQLPDYW…IDGNLQQLRL (90 aa)) enclose the 5'-3' exonuclease domain. K(+) contacts are provided by Leu171, Ala172, Pro180, Val182, and Ile185. An interaction with DNA region spans residues 184–189 (GIGPKS).

Belongs to the Xni family. The cofactor is Mg(2+). Requires K(+) as cofactor.

Its function is as follows. Has flap endonuclease activity. During DNA replication, flap endonucleases cleave the 5'-overhanging flap structure that is generated by displacement synthesis when DNA polymerase encounters the 5'-end of a downstream Okazaki fragment. This chain is Flap endonuclease Xni, found in Salmonella newport (strain SL254).